The chain runs to 299 residues: Ribonuclease H2 subunit A (299 aa).

Met1 carries the post-translational modification N-acetylmethionine. The 223-residue stretch at 28–250 (PCVLGVDEAG…AQTILEKEAE (223 aa)) folds into the RNase H type-2 domain. A divalent metal cation contacts are provided by Asp34, Glu35, and Asp141. Thr204 and Thr216 each carry phosphothreonine. A phosphoserine mark is found at Ser257 and Ser277.

The protein belongs to the RNase HII family. Eukaryotic subfamily. As to quaternary structure, the RNase H2 complex is a heterotrimer composed of the catalytic subunit RNASEH2A and the non-catalytic subunits RNASEH2B and RNASEH2C. It depends on Mn(2+) as a cofactor. The cofactor is Mg(2+).

The protein localises to the nucleus. It catalyses the reaction Endonucleolytic cleavage to 5'-phosphomonoester.. Its function is as follows. Catalytic subunit of RNase HII, an endonuclease that specifically degrades the RNA of RNA:DNA hybrids. Participates in DNA replication, possibly by mediating the removal of lagging-strand Okazaki fragment RNA primers during DNA replication. Mediates the excision of single ribonucleotides from DNA:RNA duplexes. The polypeptide is Ribonuclease H2 subunit A (RNASEH2A) (Homo sapiens (Human)).